We begin with the raw amino-acid sequence, 566 residues long: MTTREYDYIICGAGSAGNVLATRLTEDPNVTVLLLEAGGPDYRFDFRTQMPAALAYPLQGRRYNWAYETDPEPHMDNRRMECGRGKGLGGSSLINGMCYIRGNALDYDNWATHQGLENWTYLDCLPYFKKAETRDIGPNDYHGGDGPVSVTTSKPGVNPLFEAMVEAGVQAGYPRTEDLNGYQQEGFGPMDRTVTPKGRRASTARGYLDQAKTRPNLEIVTHALADRILFDGKRASGVTYLRGNERATAHARREVLVCSGAIASPQLLQRSGVGPGAWLKELDIPIVLDLPGVGQNLQDHLEMYIQYECKEPVSLYPALKWWNQPKIGLEWMLNGTGLGASNHFEAGGFIRTRDDDPWPNIQYHFLPVAINYNGSNAIEMHGFQAHVGSMRSPSRGRVKLRSRDPNAHPSILFNYMAEALDWREFRDAIRATREIMRQPALDRYRGRELNPGADLKSDKELDAFVRARAETAFHPSCSCKMGYDDMAVVDNEGRVHGLEGLRVVDASIMPIITTGNLNAPTIMIAEKIADKIRGRKPLERANVPYFVANGAPARNVAKAVRQPETV.

7-36 (DYIICGAGSAGNVLATRLTEDPNVTVLLLE) contributes to the FAD binding site. A disordered region spans residues 182–204 (YQQEGFGPMDRTVTPKGRRASTA). The Proton acceptor role is filled by His-474.

Belongs to the GMC oxidoreductase family. FAD serves as cofactor.

The enzyme catalyses choline + A = betaine aldehyde + AH2. The catalysed reaction is betaine aldehyde + NAD(+) + H2O = glycine betaine + NADH + 2 H(+). It participates in amine and polyamine biosynthesis; betaine biosynthesis via choline pathway; betaine aldehyde from choline (cytochrome c reductase route): step 1/1. Functionally, involved in the biosynthesis of the osmoprotectant glycine betaine. Catalyzes the oxidation of choline to betaine aldehyde and betaine aldehyde to glycine betaine at the same rate. The sequence is that of Oxygen-dependent choline dehydrogenase from Burkholderia multivorans (strain ATCC 17616 / 249).